A 212-amino-acid chain; its full sequence is Thymidylate kinase (212 aa).

10–17 (GPDGAGKT) contacts ATP.

It belongs to the thymidylate kinase family.

It carries out the reaction dTMP + ATP = dTDP + ADP. Its function is as follows. Phosphorylation of dTMP to form dTDP in both de novo and salvage pathways of dTTP synthesis. The sequence is that of Thymidylate kinase from Enterococcus faecalis (strain ATCC 700802 / V583).